The chain runs to 644 residues: Type III restriction-modification enzyme EcoP15I Mod subunit (644 aa).

The segment at 123–126 (DPPY) is binding of S-adenosyl methionine.

This sequence belongs to the N(4)/N(6)-methyltransferase family. Forms a homodimer capable of methylating the target sequence in the absence of Res. A heterotetramer with stoichiometry Res(2)Mod(2). A heterotrimer with stoichiometry Res(1)Mod(2).

The enzyme catalyses a 2'-deoxyadenosine in DNA + S-adenosyl-L-methionine = an N(6)-methyl-2'-deoxyadenosine in DNA + S-adenosyl-L-homocysteine + H(+). A beta subtype methylase that binds the system-specific DNA recognition site 5'-CAGCAG-3' and methylates A-5 (of only 1 strand as the other does not have an A residue). DNA restriction requires both the Res and Mod subunits. The A-5 nucleotide flips into the catalytic pocket of one Mod subunit for modification, while the other Mod subunit makes most of the DNA sequence-specific contacts. The polypeptide is Type III restriction-modification enzyme EcoP15I Mod subunit (Escherichia coli).